Consider the following 338-residue polypeptide: Ketol-acid reductoisomerase (NADP(+)) (338 aa).

The KARI N-terminal Rossmann domain occupies 1 to 181; it reads MQVYYDKDAD…GGGRAGVIET (181 aa). Residues 24-27, arginine 47, serine 50, serine 52, and 82-85 each bind NADP(+); these read YGSQ and DEHQ. Histidine 107 is a catalytic residue. Glycine 133 contacts NADP(+). A KARI C-terminal knotted domain is found at 182–327; it reads SFKDETETDL…AKLRDMMPWI (146 aa). Residues aspartate 190, glutamate 194, glutamate 226, and glutamate 230 each coordinate Mg(2+). Serine 251 serves as a coordination point for substrate.

This sequence belongs to the ketol-acid reductoisomerase family. The cofactor is Mg(2+).

The enzyme catalyses (2R)-2,3-dihydroxy-3-methylbutanoate + NADP(+) = (2S)-2-acetolactate + NADPH + H(+). It catalyses the reaction (2R,3R)-2,3-dihydroxy-3-methylpentanoate + NADP(+) = (S)-2-ethyl-2-hydroxy-3-oxobutanoate + NADPH + H(+). It participates in amino-acid biosynthesis; L-isoleucine biosynthesis; L-isoleucine from 2-oxobutanoate: step 2/4. Its pathway is amino-acid biosynthesis; L-valine biosynthesis; L-valine from pyruvate: step 2/4. Involved in the biosynthesis of branched-chain amino acids (BCAA). Catalyzes an alkyl-migration followed by a ketol-acid reduction of (S)-2-acetolactate (S2AL) to yield (R)-2,3-dihydroxy-isovalerate. In the isomerase reaction, S2AL is rearranged via a Mg-dependent methyl migration to produce 3-hydroxy-3-methyl-2-ketobutyrate (HMKB). In the reductase reaction, this 2-ketoacid undergoes a metal-dependent reduction by NADPH to yield (R)-2,3-dihydroxy-isovalerate. The polypeptide is Ketol-acid reductoisomerase (NADP(+)) (Thioalkalivibrio sulfidiphilus (strain HL-EbGR7)).